The primary structure comprises 273 residues: Dermonecrotic toxin LapSicTox-alphaIB1ai (273 aa).

His-5 is an active-site residue. Glu-25 and Asp-27 together coordinate Mg(2+). The active-site Nucleophile is the His-41. Intrachain disulfides connect Cys-45–Cys-51 and Cys-47–Cys-190. Asp-85 provides a ligand contact to Mg(2+). Asn-250 is a glycosylation site (N-linked (GlcNAc...) asparagine).

The protein belongs to the arthropod phospholipase D family. Class II subfamily. The cofactor is Mg(2+). Expressed by the venom gland.

Its subcellular location is the secreted. It carries out the reaction an N-(acyl)-sphingosylphosphocholine = an N-(acyl)-sphingosyl-1,3-cyclic phosphate + choline. The enzyme catalyses an N-(acyl)-sphingosylphosphoethanolamine = an N-(acyl)-sphingosyl-1,3-cyclic phosphate + ethanolamine. The catalysed reaction is a 1-acyl-sn-glycero-3-phosphocholine = a 1-acyl-sn-glycero-2,3-cyclic phosphate + choline. It catalyses the reaction a 1-acyl-sn-glycero-3-phosphoethanolamine = a 1-acyl-sn-glycero-2,3-cyclic phosphate + ethanolamine. Its function is as follows. Dermonecrotic toxins cleave the phosphodiester linkage between the phosphate and headgroup of certain phospholipids (sphingolipid and lysolipid substrates), forming an alcohol (often choline) and a cyclic phosphate. This toxin acts on sphingomyelin (SM). It may also act on ceramide phosphoethanolamine (CPE), lysophosphatidylcholine (LPC) and lysophosphatidylethanolamine (LPE), but not on lysophosphatidylserine (LPS), and lysophosphatidylglycerol (LPG). It acts by transphosphatidylation, releasing exclusively cyclic phosphate products as second products. Induces dermonecrosis, hemolysis, increased vascular permeability, edema, inflammatory response, and platelet aggregation. The chain is Dermonecrotic toxin LapSicTox-alphaIB1ai from Loxosceles apachea (Apache recluse spider).